The sequence spans 396 residues: Phosphoglycerate kinase (396 aa).

Residues 21 to 23 (DFN), R36, 59 to 62 (HLGK), R119, and R156 contribute to the substrate site. ATP contacts are provided by residues K206, G294, E325, and 352–355 (GGDS).

The protein belongs to the phosphoglycerate kinase family. Monomer.

The protein resides in the cytoplasm. It carries out the reaction (2R)-3-phosphoglycerate + ATP = (2R)-3-phospho-glyceroyl phosphate + ADP. The protein operates within carbohydrate degradation; glycolysis; pyruvate from D-glyceraldehyde 3-phosphate: step 2/5. The polypeptide is Phosphoglycerate kinase (Listeria welshimeri serovar 6b (strain ATCC 35897 / DSM 20650 / CCUG 15529 / CIP 8149 / NCTC 11857 / SLCC 5334 / V8)).